A 409-amino-acid chain; its full sequence is ATPase ASNA1 homolog (409 aa).

21-28 (KGGVGKTT) serves as a coordination point for ATP. The active site involves D62. 2 residues coordinate ATP: E303 and N330. Zn(2+) contacts are provided by C342 and C345.

Belongs to the arsA ATPase family. Homodimer.

It is found in the cytoplasm. The protein localises to the endoplasmic reticulum. ATPase required for the post-translational delivery of tail-anchored (TA) proteins to the endoplasmic reticulum. Recognizes and selectively binds the transmembrane domain of TA proteins in the cytosol. This complex then targets to the endoplasmic reticulum by membrane-bound receptors, where the tail-anchored protein is released for insertion. This process is regulated by ATP binding and hydrolysis. ATP binding drives the homodimer towards the closed dimer state, facilitating recognition of newly synthesized TA membrane proteins. ATP hydrolysis is required for insertion. Subsequently, the homodimer reverts towards the open dimer state, lowering its affinity for the membrane-bound receptor, and returning it to the cytosol to initiate a new round of targeting. This chain is ATPase ASNA1 homolog, found in Leishmania major.